A 97-amino-acid chain; its full sequence is Small ribosomal subunit protein bS6 (97 aa).

Belongs to the bacterial ribosomal protein bS6 family.

In terms of biological role, binds together with bS18 to 16S ribosomal RNA. The protein is Small ribosomal subunit protein bS6 of Lactococcus lactis subsp. cremoris (strain MG1363).